Consider the following 619-residue polypeptide: Dihydroxy-acid dehydratase (619 aa).

Position 81 (Asp-81) interacts with Mg(2+). Cys-122 provides a ligand contact to [2Fe-2S] cluster. The Mg(2+) site is built by Asp-123 and Lys-124. Lys-124 is subject to N6-carboxylysine. Position 195 (Cys-195) interacts with [2Fe-2S] cluster. A Mg(2+)-binding site is contributed by Glu-494. The Proton acceptor role is filled by Ser-520.

Belongs to the IlvD/Edd family. Homodimer. [2Fe-2S] cluster serves as cofactor. Mg(2+) is required as a cofactor.

It catalyses the reaction (2R)-2,3-dihydroxy-3-methylbutanoate = 3-methyl-2-oxobutanoate + H2O. The catalysed reaction is (2R,3R)-2,3-dihydroxy-3-methylpentanoate = (S)-3-methyl-2-oxopentanoate + H2O. It participates in amino-acid biosynthesis; L-isoleucine biosynthesis; L-isoleucine from 2-oxobutanoate: step 3/4. The protein operates within amino-acid biosynthesis; L-valine biosynthesis; L-valine from pyruvate: step 3/4. Its function is as follows. Functions in the biosynthesis of branched-chain amino acids. Catalyzes the dehydration of (2R,3R)-2,3-dihydroxy-3-methylpentanoate (2,3-dihydroxy-3-methylvalerate) into 2-oxo-3-methylpentanoate (2-oxo-3-methylvalerate) and of (2R)-2,3-dihydroxy-3-methylbutanoate (2,3-dihydroxyisovalerate) into 2-oxo-3-methylbutanoate (2-oxoisovalerate), the penultimate precursor to L-isoleucine and L-valine, respectively. The polypeptide is Dihydroxy-acid dehydratase (Shewanella sp. (strain MR-7)).